A 348-amino-acid chain; its full sequence is GPALPP motifs-containing protein 1 (348 aa).

2 disordered regions span residues methionine 1 to proline 163 and glutamine 177 to valine 317. At alanine 2 the chain carries N-acetylalanine. The GPALPP motif 1 signature appears at glycine 7–proline 12. A compositionally biased stretch (basic and acidic residues) spans phenylalanine 14–proline 27. Phosphoserine is present on serine 28. A GPALPP motif 2 motif is present at residues glycine 32–proline 37. Residues serine 41 to glutamate 59 are compositionally biased toward low complexity. The span at glycine 60–alanine 69 shows a compositional bias: acidic residues. Residues glycine 93–proline 98 carry the GPALPP motif 3 motif. The residue at position 106 (serine 106) is a Phosphoserine. Over residues proline 108–proline 117 the composition is skewed to pro residues. Positions glycine 113–proline 118 match the GPALPP motif 4 motif. Serine 138, serine 143, and serine 148 each carry phosphoserine. The segment covering glutamate 144–isoleucine 154 has biased composition (acidic residues). Composition is skewed to basic and acidic residues over residues glutamine 177 to threonine 195, proline 235 to alanine 269, glutamate 277 to isoleucine 287, and lysine 295 to valine 317. Glycyl lysine isopeptide (Lys-Gly) (interchain with G-Cter in SUMO2) cross-links involve residues lysine 279 and lysine 316.

This Rattus norvegicus (Rat) protein is GPALPP motifs-containing protein 1 (Gpalpp1).